We begin with the raw amino-acid sequence, 813 residues long: Cadherin-22 (813 aa).

A signal peptide spans 1–33 (MRPRPEGALRAGAALSPVLLFLLLLPLLGHLWA). At 34-621 (ASTPAPSSLS…AFVMAASLSP (588 aa)) the chain is on the extracellular side. Cadherin domains lie at 61 to 165 (WVWN…EPRF), 166 to 274 (LHGP…PPRF), 275 to 391 (PQKM…PPEF), 392 to 495 (RPPS…NPPE), and 496 to 613 (LATP…TTAF). Asn-159 carries an N-linked (GlcNAc...) asparagine glycan. Residues Asn-463 and Asn-609 are each glycosylated (N-linked (GlcNAc...) asparagine). The chain crosses the membrane as a helical span at residues 622 to 642 (GALIALLVCVLILVVLALLIL). Over 643–813 (TLRRHHKSHL…HRGDDEAPAS (171 aa)) the chain is Cytoplasmic. Residues 696–726 (GGDPGGGAASPPQAASSSERHSLPRGPSSPE) form a disordered region.

Predominantly expressed in brain. Abundant in olfactory bulb, cerebrum, and cerebellum, less in pons, medulla, and spinal cord. Low expression in heart. No expression in lung, liver, spleen, kidney, testis, stomach, intestine, colon, and placenta.

Its subcellular location is the cell membrane. In terms of biological role, cadherins are calcium-dependent cell adhesion proteins. They preferentially interact with themselves in a homophilic manner in connecting cells; cadherins may thus contribute to the sorting of heterogeneous cell types. PB-cadherins may have a role in the morphological organization of pituitary gland and brain tissues. The polypeptide is Cadherin-22 (Cdh22) (Mus musculus (Mouse)).